The primary structure comprises 197 residues: 3-isopropylmalate dehydratase small subunit (197 aa).

It belongs to the LeuD family. LeuD type 1 subfamily. In terms of assembly, heterodimer of LeuC and LeuD.

The enzyme catalyses (2R,3S)-3-isopropylmalate = (2S)-2-isopropylmalate. It participates in amino-acid biosynthesis; L-leucine biosynthesis; L-leucine from 3-methyl-2-oxobutanoate: step 2/4. Catalyzes the isomerization between 2-isopropylmalate and 3-isopropylmalate, via the formation of 2-isopropylmaleate. This chain is 3-isopropylmalate dehydratase small subunit, found in Geobacillus sp. (strain WCH70).